The chain runs to 84 residues: Putative antitoxin VapB7 (84 aa).

Its function is as follows. Antitoxin component of a possible type II toxin-antitoxin (TA) system. The cognate toxin is VapC7. The protein is Putative antitoxin VapB7 (vapB7) of Mycobacterium tuberculosis (strain ATCC 25618 / H37Rv).